Consider the following 353-residue polypeptide: Photosystem II protein D1 (353 aa).

At Thr2 the chain carries N-acetylthreonine. Thr2 is subject to Phosphothreonine. 3 helical membrane-spanning segments follow: residues 29 to 46 (YIGWFGVLMIPTLLTATS), 118 to 133 (HFLLGVACYMGREWEL), and 142 to 156 (WIAVAYSAPVAAAAA). His118 is a chlorophyll a binding site. Tyr126 is a binding site for pheophytin a. 2 residues coordinate [CaMn4O5] cluster: Asp170 and Glu189. The helical transmembrane segment at 197 to 218 (FHMLGVAGVFGGSLFSAMHGSL) threads the bilayer. Position 198 (His198) interacts with chlorophyll a. Residues His215 and 264–265 (SF) each bind a quinone. Fe cation is bound at residue His215. His272 lines the Fe cation pocket. A helical transmembrane segment spans residues 274–288 (FLAAWPVVGIWFTAL). [CaMn4O5] cluster is bound by residues His332, Glu333, Asp342, and Ala344. Positions 345-353 (SVEAPSVKA) are excised as a propeptide.

It belongs to the reaction center PufL/M/PsbA/D family. PSII is composed of 1 copy each of membrane proteins PsbA, PsbB, PsbC, PsbD, PsbE, PsbF, PsbH, PsbI, PsbJ, PsbK, PsbL, PsbM, PsbT, PsbX, PsbY, PsbZ, Psb30/Ycf12, at least 3 peripheral proteins of the oxygen-evolving complex and a large number of cofactors. It forms dimeric complexes. Requires The D1/D2 heterodimer binds P680, chlorophylls that are the primary electron donor of PSII, and subsequent electron acceptors. It shares a non-heme iron and each subunit binds pheophytin, quinone, additional chlorophylls, carotenoids and lipids. D1 provides most of the ligands for the Mn4-Ca-O5 cluster of the oxygen-evolving complex (OEC). There is also a Cl(-1) ion associated with D1 and D2, which is required for oxygen evolution. The PSII complex binds additional chlorophylls, carotenoids and specific lipids. as cofactor. Post-translationally, tyr-161 forms a radical intermediate that is referred to as redox-active TyrZ, YZ or Y-Z. C-terminally processed by CTPA; processing is essential to allow assembly of the oxygen-evolving complex and thus photosynthetic growth.

It localises to the plastid. The protein localises to the chloroplast thylakoid membrane. The catalysed reaction is 2 a plastoquinone + 4 hnu + 2 H2O = 2 a plastoquinol + O2. In terms of biological role, photosystem II (PSII) is a light-driven water:plastoquinone oxidoreductase that uses light energy to abstract electrons from H(2)O, generating O(2) and a proton gradient subsequently used for ATP formation. It consists of a core antenna complex that captures photons, and an electron transfer chain that converts photonic excitation into a charge separation. The D1/D2 (PsbA/PsbD) reaction center heterodimer binds P680, the primary electron donor of PSII as well as several subsequent electron acceptors. This chain is Photosystem II protein D1, found in Angiopteris evecta (Mule's foot fern).